Reading from the N-terminus, the 55-residue chain is VTSYTLNEVVPLKDVVPEWVRIGFSATTGAEFAAHEVLSWSFHSELGGTSASKQS.

The protein belongs to the leguminous lectin family. As to quaternary structure, tetramer of two alpha and two beta chains.

The polypeptide is Mannose/glucose-specific lectin alpha chain (Lathyrus sativus (White vetchling)).